The primary structure comprises 964 residues: Glycine dehydrogenase (decarboxylating) (964 aa).

At K711 the chain carries N6-(pyridoxal phosphate)lysine.

The protein belongs to the GcvP family. The glycine cleavage system is composed of four proteins: P, T, L and H. Pyridoxal 5'-phosphate is required as a cofactor.

The enzyme catalyses N(6)-[(R)-lipoyl]-L-lysyl-[glycine-cleavage complex H protein] + glycine + H(+) = N(6)-[(R)-S(8)-aminomethyldihydrolipoyl]-L-lysyl-[glycine-cleavage complex H protein] + CO2. Its function is as follows. The glycine cleavage system catalyzes the degradation of glycine. The P protein binds the alpha-amino group of glycine through its pyridoxal phosphate cofactor; CO(2) is released and the remaining methylamine moiety is then transferred to the lipoamide cofactor of the H protein. This Prochlorococcus marinus (strain SARG / CCMP1375 / SS120) protein is Glycine dehydrogenase (decarboxylating).